Reading from the N-terminus, the 206-residue chain is 2,3-bisphosphoglycerate-dependent phosphoglycerate mutase (206 aa).

Substrate-binding positions include Arg-9–Asn-16, Thr-22–Gly-23, Arg-61, Glu-88–Tyr-91, Lys-99, Arg-115–Arg-116, and Gly-159–Asn-160. His-10 (tele-phosphohistidine intermediate) is an active-site residue. Glu-88 acts as the Proton donor/acceptor in catalysis.

This sequence belongs to the phosphoglycerate mutase family. BPG-dependent PGAM subfamily. In terms of assembly, homodimer.

The enzyme catalyses (2R)-2-phosphoglycerate = (2R)-3-phosphoglycerate. Its pathway is carbohydrate degradation; glycolysis; pyruvate from D-glyceraldehyde 3-phosphate: step 3/5. Catalyzes the interconversion of 2-phosphoglycerate and 3-phosphoglycerate. This chain is 2,3-bisphosphoglycerate-dependent phosphoglycerate mutase, found in Brucella abortus (strain S19).